Consider the following 509-residue polypeptide: Heat shock 70 kDa protein 14 (509 aa).

The protein belongs to the heat shock protein 70 family. Component of ribosome-associated complex (RAC), a heterodimer composed of Hsp70/DnaK-type chaperone HSPA14 and Hsp40/DnaJ-type chaperone DNAJC2.

The protein resides in the cytoplasm. It is found in the cytosol. Component of the ribosome-associated complex (RAC), a complex involved in folding or maintaining nascent polypeptides in a folding-competent state. In the RAC complex, binds to the nascent polypeptide chain, while DNAJC2 stimulates its ATPase activity. In Pongo abelii (Sumatran orangutan), this protein is Heat shock 70 kDa protein 14 (HSPA14).